The sequence spans 200 residues: Imidazoleglycerol-phosphate dehydratase (200 aa).

Belongs to the imidazoleglycerol-phosphate dehydratase family.

The protein resides in the cytoplasm. The enzyme catalyses D-erythro-1-(imidazol-4-yl)glycerol 3-phosphate = 3-(imidazol-4-yl)-2-oxopropyl phosphate + H2O. It participates in amino-acid biosynthesis; L-histidine biosynthesis; L-histidine from 5-phospho-alpha-D-ribose 1-diphosphate: step 6/9. The sequence is that of Imidazoleglycerol-phosphate dehydratase from Leifsonia xyli subsp. xyli (strain CTCB07).